The primary structure comprises 314 residues: Homoserine O-succinyltransferase (314 aa).

The Acyl-thioester intermediate role is filled by cysteine 142. 2 residues coordinate substrate: lysine 163 and serine 192. Histidine 235 (proton acceptor) is an active-site residue. The active site involves glutamate 237. Arginine 249 lines the substrate pocket.

It belongs to the MetA family.

It localises to the cytoplasm. The catalysed reaction is L-homoserine + succinyl-CoA = O-succinyl-L-homoserine + CoA. It functions in the pathway amino-acid biosynthesis; L-methionine biosynthesis via de novo pathway; O-succinyl-L-homoserine from L-homoserine: step 1/1. Transfers a succinyl group from succinyl-CoA to L-homoserine, forming succinyl-L-homoserine. This chain is Homoserine O-succinyltransferase, found in Shewanella sediminis (strain HAW-EB3).